The chain runs to 294 residues: Elongation factor Ts (294 aa).

Residues 81-84 (TDFV) form an involved in Mg(2+) ion dislocation from EF-Tu region.

Belongs to the EF-Ts family.

The protein resides in the cytoplasm. Associates with the EF-Tu.GDP complex and induces the exchange of GDP to GTP. It remains bound to the aminoacyl-tRNA.EF-Tu.GTP complex up to the GTP hydrolysis stage on the ribosome. The protein is Elongation factor Ts of Lawsonia intracellularis (strain PHE/MN1-00).